We begin with the raw amino-acid sequence, 24 residues long: Coenzyme PQQ synthesis protein A (24 aa).

The segment at residues 16-20 (EVTMY) is a cross-link (pyrroloquinoline quinone (Glu-Tyr)).

It belongs to the PqqA family.

Its pathway is cofactor biosynthesis; pyrroloquinoline quinone biosynthesis. Functionally, required for coenzyme pyrroloquinoline quinone (PQQ) biosynthesis. PQQ is probably formed by cross-linking a specific glutamate to a specific tyrosine residue and excising these residues from the peptide. The protein is Coenzyme PQQ synthesis protein A of Pseudomonas syringae pv. syringae (strain B728a).